The following is a 187-amino-acid chain: UPF0232 protein JTY_0004 (187 aa).

2 stretches are compositionally biased toward basic and acidic residues: residues Met-1–Met-17 and Leu-24–Arg-45. Disordered regions lie at residues Met-1–Pro-75 and Pro-168–Gly-187.

The protein belongs to the UPF0232 family.

The protein is UPF0232 protein JTY_0004 of Mycobacterium bovis (strain BCG / Tokyo 172 / ATCC 35737 / TMC 1019).